We begin with the raw amino-acid sequence, 257 residues long: RING-H2 finger protein ATL5 (257 aa).

The helical transmembrane segment at isoleucine 28 to serine 48 threads the bilayer. The segment at cysteine 113 to arginine 155 adopts an RING-type; atypical zinc-finger fold. The disordered stretch occupies residues glutamate 181 to phenylalanine 209. Over residues alanine 185 to proline 206 the composition is skewed to low complexity.

Belongs to the RING-type zinc finger family. ATL subfamily.

The protein localises to the membrane. It catalyses the reaction S-ubiquitinyl-[E2 ubiquitin-conjugating enzyme]-L-cysteine + [acceptor protein]-L-lysine = [E2 ubiquitin-conjugating enzyme]-L-cysteine + N(6)-ubiquitinyl-[acceptor protein]-L-lysine.. It functions in the pathway protein modification; protein ubiquitination. This Arabidopsis thaliana (Mouse-ear cress) protein is RING-H2 finger protein ATL5 (ATL5).